The following is a 465-amino-acid chain: Chromosomal replication initiator protein DnaA (465 aa).

The segment at 1-72 (MRTKQLWQVA…ETLSLLLGRP (72 aa)) is domain I, interacts with DnaA modulators. The tract at residues 72–117 (PIAVHFTVHGQDDEEHPVQRRPQRRALASEEGSASKQLSLTPSPEH) is domain II. The interval 80-118 (HGQDDEEHPVQRRPQRRALASEEGSASKQLSLTPSPEHG) is disordered. Positions 103-113 (GSASKQLSLTP) are enriched in polar residues. The segment at 118 to 334 (GLNPRYTFEK…GALNRIVALA (217 aa)) is domain III, AAA+ region. Positions 162, 164, 165, and 166 each coordinate ATP. A domain IV, binds dsDNA region spans residues 335-465 (QLTHQPITLA…DAKAPLASRH (131 aa)).

This sequence belongs to the DnaA family. Oligomerizes as a right-handed, spiral filament on DNA at oriC.

It localises to the cytoplasm. Plays an essential role in the initiation and regulation of chromosomal replication. ATP-DnaA binds to the origin of replication (oriC) to initiate formation of the DNA replication initiation complex once per cell cycle. Binds the DnaA box (a 9 base pair repeat at the origin) and separates the double-stranded (ds)DNA. Forms a right-handed helical filament on oriC DNA; dsDNA binds to the exterior of the filament while single-stranded (ss)DNA is stabiized in the filament's interior. The ATP-DnaA-oriC complex binds and stabilizes one strand of the AT-rich DNA unwinding element (DUE), permitting loading of DNA polymerase. After initiation quickly degrades to an ADP-DnaA complex that is not apt for DNA replication. Binds acidic phospholipids. The chain is Chromosomal replication initiator protein DnaA from Thermomicrobium roseum (strain ATCC 27502 / DSM 5159 / P-2).